The following is a 432-amino-acid chain: Putative D-alanyl-D-alanine carboxypeptidase (432 aa).

The chain crosses the membrane as a helical; Signal-anchor span at residues 7–25 (ATVLLTFSLSAFAVEYPVL).

It belongs to the peptidase S12 family. YfeW subfamily.

It localises to the cell inner membrane. It carries out the reaction Preferential cleavage: (Ac)2-L-Lys-D-Ala-|-D-Ala. Also transpeptidation of peptidyl-alanyl moieties that are N-acyl substituents of D-alanine.. This Salmonella enteritidis PT4 (strain P125109) protein is Putative D-alanyl-D-alanine carboxypeptidase.